The following is a 455-amino-acid chain: Catalase-like protein (455 aa).

Residues 1-25 are disordered; it reads MSQQDKKLTGVFGHPVSDRENSMTA.

The protein belongs to the catalase family.

Catalytically inactive. The chain is Catalase-like protein (katB) from Staphylococcus aureus.